A 608-amino-acid polypeptide reads, in one-letter code: Probable Ufm1-specific protease 2 (608 aa).

Catalysis depends on residues C441, D565, and H567.

This sequence belongs to the peptidase C78 family.

Its function is as follows. Thiol protease which recognizes and hydrolyzes the peptide bond at the C-terminal Gly of UFM1, a ubiquitin-like modifier protein bound to a number of target proteins. Does not hydrolyze SUMO1 or ISG15 ubiquitin-like proteins. In Drosophila pseudoobscura pseudoobscura (Fruit fly), this protein is Probable Ufm1-specific protease 2.